The sequence spans 326 residues: Tumor necrosis factor soluble receptor (326 aa).

Positions 1–16 (MFRLTLLLAYVACVYG) are cleaved as a signal peptide. TNFR-Cys repeat units lie at residues 27–62 (KCRGNDYEKDGLCCTSCPPGSYASRLCGPGSDTVCS), 63–104 (PCKN…DRVC), 105–147 (DCSA…VLCT), and 148–186 (KCPRYTYSDAVSSTETCTSSFNYISVEFNLYPVNDTSCT). 10 cysteine pairs are disulfide-bonded: cysteine 28–cysteine 39, cysteine 40–cysteine 53, cysteine 43–cysteine 61, cysteine 64–cysteine 79, cysteine 82–cysteine 96, cysteine 86–cysteine 104, cysteine 106–cysteine 120, cysteine 123–cysteine 146, cysteine 129–cysteine 149, and cysteine 164–cysteine 185. Asparagine 66 carries N-linked (GlcNAc...) asparagine; by host glycosylation. N-linked (GlcNAc...) asparagine; by host glycans are attached at residues asparagine 181, asparagine 205, and asparagine 238.

Functionally, binds to TNF-alpha and beta. Probably prevents TNF to reach cellular target and thereby deampening the potential antiviral effects of the cytokine. The protein is Tumor necrosis factor soluble receptor of Oryctolagus cuniculus (Rabbit).